Consider the following 174-residue polypeptide: uncharacterized protein (174 aa).

To E.coli HemX C-terminal region.

This is an uncharacterized protein from Haemophilus influenzae (strain ATCC 51907 / DSM 11121 / KW20 / Rd).